The following is a 207-amino-acid chain: Protein phosphatase inhibitor 2 (207 aa).

Disordered regions lie at residues 1–44, 65–97, and 110–146; these read MAAS…SKKS, LMKIDEPSTPYHSMVADDEDALSDSETTEALTP, and ESLEPKYRVREQESSGDEDSDLSPEEREKKRQFEMKR. N-acetylalanine is present on Ala2. Residues 12–17 are required for binding PPP1CC; sequence KGILKN. The span at 19–28 shows a compositional bias: low complexity; it reads SSTTSSVVST. Basic and acidic residues predominate over residues 35–44; sequence SVDEELSKKS. Residues 43–55 are required for binding PPP1CC; the sequence is KSQKWDEMSILAT. Ser44 carries the phosphoserine; by ATM modification. Thr73 is subject to Phosphothreonine; by GSK3. A compositionally biased stretch (acidic residues) spans 80 to 91; that stretch reads ADDEDALSDSET. Ser87 and Ser89 each carry phosphoserine. Phosphothreonine occurs at positions 92 and 96. Over residues 112 to 122 the composition is skewed to basic and acidic residues; that stretch reads LEPKYRVREQE. Ser123, Ser124, Ser129, and Ser132 each carry phosphoserine. Residues 123 to 132 show a composition bias toward acidic residues; that stretch reads SSGDEDSDLS. The segment covering 133 to 145 has biased composition (basic and acidic residues); that stretch reads PEEREKKRQFEMK. The segment at 149–152 is required for binding PPP1CC catalytic center, displacing metal ions and inhibition of PPP1CC catalytic activity; it reads HYNE. The disordered stretch occupies residues 165–207; the sequence is KDLNDEEEDEEMSETAAGESMNMEESSQGSATSDQLQNKSQSS. A compositionally biased stretch (acidic residues) spans 168-177; it reads NDEEEDEEMS. A compositionally biased stretch (polar residues) spans 187 to 207; sequence MEESSQGSATSDQLQNKSQSS.

This sequence belongs to the protein phosphatase inhibitor 2 family. As to quaternary structure, heterodimer with PP1. Phosphorylation on Ser-44 by ATM activates PP1 by dissociating the PP1-PPP1R2 complex. Phosphorylation on Thr-73 by GSK3 activates PP1 by dissociating the PP1-PPP1R2 complex.

Functionally, inhibitor of protein-phosphatase 1. In Bos taurus (Bovine), this protein is Protein phosphatase inhibitor 2 (PPP1R2).